We begin with the raw amino-acid sequence, 311 residues long: Olfactory receptor 10G9 (311 aa).

The Extracellular portion of the chain corresponds to 1–23; the sequence is MSKTSLVTAFILTGLPHAPGLDA. Residues 24-44 form a helical membrane-spanning segment; the sequence is PLFGIFLVVYVLTVLGNLLIL. Over 45–52 the chain is Cytoplasmic; sequence LVIRVDSH. A helical transmembrane segment spans residues 53–73; it reads LHTPMYYFLTNLSFIDMWFST. The Extracellular segment spans residues 74–98; that stretch reads VTVPKMLMTLVSPSGRAISFHSCVA. The cysteines at positions 96 and 188 are disulfide-linked. The helical transmembrane segment at 99 to 119 threads the bilayer; sequence QLYFFHFLGSTECFLYTVMSY. Residues 120 to 138 lie on the Cytoplasmic side of the membrane; sequence DRYLAISYPLRYTSMMSGS. A helical membrane pass occupies residues 139 to 159; sequence RCALLATSTWLSGSLHSAVQT. Residues 160–196 lie on the Extracellular side of the membrane; sequence ILTFHLPYCGPNQIQHYLCDAPPILKLACADTSANEM. A helical membrane pass occupies residues 197 to 216; that stretch reads VIFVDIGLVASGCFLLIVLS. The Cytoplasmic segment spans residues 217-236; sequence YVSIVCSILRIHTSEGRHRA. Residues 237–257 form a helical membrane-spanning segment; that stretch reads FQTCASHCIVVLCFFVPCVFI. Residues 258–268 lie on the Extracellular side of the membrane; sequence YLRPGSRDVVD. A helical membrane pass occupies residues 269-289; the sequence is GVVAIFYTVLTPLLNPVVYTL. Residues 290–311 lie on the Cytoplasmic side of the membrane; sequence RNKEVKKAVLKLRDKVAHSQGE.

This sequence belongs to the G-protein coupled receptor 1 family.

The protein localises to the cell membrane. Odorant receptor. The polypeptide is Olfactory receptor 10G9 (OR10G9) (Homo sapiens (Human)).